We begin with the raw amino-acid sequence, 1061 residues long: Ribonuclease 3 (1061 aa).

Disordered regions lie at residues M1–Q20 and P149–E244. A compositionally biased stretch (basic and acidic residues) spans K156 to S173. RNase III domains follow at residues L586 to G759 and F811 to G935. 3 residues coordinate Mg(2+): E851, D921, and E924. The DRBM domain occupies D962–K1037.

It belongs to the ribonuclease III family. The cofactor is Mg(2+). Mn(2+) serves as cofactor.

The protein localises to the nucleus. The catalysed reaction is Endonucleolytic cleavage to 5'-phosphomonoester.. Executes the initial step of microRNA (miRNA) processing in the nucleus, that is the cleavage of pri-miRNA to release pre-miRNA. Involved in pre-rRNA processing. Cleaves double-strand RNA and does not cleave single-strand RNA. Involved in fertility. Required for the function or synthesis of the let-7 miRNA. In Caenorhabditis briggsae, this protein is Ribonuclease 3.